The following is a 311-amino-acid chain: R2-like ligand binding oxidase (311 aa).

Mn(2+) contacts are provided by glutamate 68, glutamate 101, and histidine 104. The segment at residues 71-162 (VTQDIQPFMA…AAQVRASVTY (92 aa)) is a cross-link (3-(O4'-tyrosyl)-valine (Val-Tyr)). Glutamate 101 contacts Fe cation. Glutamate 167, glutamate 202, and histidine 205 together coordinate Fe cation.

This sequence belongs to the ribonucleoside diphosphate reductase small chain family. R2-like ligand binding oxidase subfamily. Homodimer. Fe cation serves as cofactor. Requires Mn(2+) as cofactor.

Functionally, probable oxidase that might be involved in lipid metabolism. The chain is R2-like ligand binding oxidase from Mycolicibacterium paratuberculosis (strain ATCC BAA-968 / K-10) (Mycobacterium paratuberculosis).